A 359-amino-acid chain; its full sequence is Histidinol-phosphate aminotransferase (359 aa).

Position 217 is an N6-(pyridoxal phosphate)lysine (K217).

Belongs to the class-II pyridoxal-phosphate-dependent aminotransferase family. Histidinol-phosphate aminotransferase subfamily. Homodimer. It depends on pyridoxal 5'-phosphate as a cofactor.

The catalysed reaction is L-histidinol phosphate + 2-oxoglutarate = 3-(imidazol-4-yl)-2-oxopropyl phosphate + L-glutamate. It functions in the pathway amino-acid biosynthesis; L-histidine biosynthesis; L-histidine from 5-phospho-alpha-D-ribose 1-diphosphate: step 7/9. The sequence is that of Histidinol-phosphate aminotransferase from Salmonella newport (strain SL254).